A 623-amino-acid polypeptide reads, in one-letter code: Fanconi anemia group G protein homolog (623 aa).

TPR repeat units lie at residues 251 to 284 (VQVYTALGACLRKMGNPQRALLYLTEALKVGTTC), 349 to 382 (SQAKHLLASRCLQTGRAEDAAEHYLDLLAMLLGG), 458 to 491 (SATHLLQGQAWSQLKAQKEALSEFSQCLELLFRT), and 517 to 550 (VAALISRGLEWVASGQDTKALSDFLLSVQICPGN).

In terms of assembly, belongs to the multisubunit FA complex composed of FANCA, FANCB, FANCC, FANCE, FANCF, FANCG, FANCL/PHF9 and FANCM. In complex with FANCF, FANCA and FANCL, but not with FANCC, nor FANCE, interacts with HES1; this interaction may be essential for the stability and nuclear localization of FA core complex proteins. The complex with FANCC and FANCG may also include EIF2AK2 and HSP70. As to expression, highest expression levels in spleen, thymus and testis.

It localises to the nucleus. In terms of biological role, DNA repair protein that may operate in a postreplication repair or a cell cycle checkpoint function. May be implicated in interstrand DNA cross-link repair and in the maintenance of normal chromosome stability. Candidate tumor suppressor gene. In Mus musculus (Mouse), this protein is Fanconi anemia group G protein homolog (Fancg).